Consider the following 344-residue polypeptide: MNRIFPEQLNHHLAQGLARVYLLQGQDPLLLSETEDTICQVANLQGFDEKNTIQVDSQTDWAQLIESCQSIGLFFSKQILSLNLPENFTALLQKNLQELISVLHKDVLLILQVAKLAKGIEKQTWFITLNQYEPNTILINCQTPTVENLPRWVKNRTKAMGLDADNEAIQQLCYSYENNLLALKQALQLLDLLYPDHKLNYNRVISVVEQSSIFTPFQWIDALLVGKANRAKRILKGLQAEDVQPVILLRTLQRELFTLLELTKPQQRIVTTEKLPIQQIKTEFDRLKIWQNRRPLFLSAIQRLTYQTLYEIIQELANIERLAKQEFSDEVWIKLADLSVKICL.

Belongs to the DNA polymerase HolA subunit family. As to quaternary structure, DNA polymerase III contains a core (composed of alpha, epsilon and theta chains) that associates with a tau subunit. This core dimerizes to form the POLIII' complex. PolIII' associates with the gamma complex (composed of gamma, delta, delta', psi and chi chains) and with the beta chain to form the complete DNA polymerase III complex.

It catalyses the reaction DNA(n) + a 2'-deoxyribonucleoside 5'-triphosphate = DNA(n+1) + diphosphate. Functionally, DNA polymerase III is a complex, multichain enzyme responsible for most of the replicative synthesis in bacteria. This DNA polymerase also exhibits 3' to 5' exonuclease activity. The delta subunit seems to interact with the gamma subunit to transfer the beta subunit on the DNA. The polypeptide is DNA polymerase III subunit delta (holA) (Haemophilus influenzae (strain ATCC 51907 / DSM 11121 / KW20 / Rd)).